The chain runs to 358 residues: Methylthioribose-1-phosphate isomerase (358 aa).

Substrate is bound by residues 54 to 56 (RGA), arginine 96, and glutamine 205. Residue aspartate 246 is the Proton donor of the active site. 256-257 (AK) provides a ligand contact to substrate.

It belongs to the eIF-2B alpha/beta/delta subunits family. MtnA subfamily.

The enzyme catalyses 5-(methylsulfanyl)-alpha-D-ribose 1-phosphate = 5-(methylsulfanyl)-D-ribulose 1-phosphate. It participates in amino-acid biosynthesis; L-methionine biosynthesis via salvage pathway; L-methionine from S-methyl-5-thio-alpha-D-ribose 1-phosphate: step 1/6. Its function is as follows. Catalyzes the interconversion of methylthioribose-1-phosphate (MTR-1-P) into methylthioribulose-1-phosphate (MTRu-1-P). In Pseudomonas entomophila (strain L48), this protein is Methylthioribose-1-phosphate isomerase.